The following is a 76-amino-acid chain: DNA gyrase inhibitor YacG (76 aa).

Zn(2+)-binding residues include Cys20, Cys23, Cys39, and Cys43. Residues 54-76 are disordered; sequence EEKSIPGAPDLSDSDGWSDDMGY. Over residues 65 to 76 the composition is skewed to acidic residues; it reads SDSDGWSDDMGY.

Belongs to the DNA gyrase inhibitor YacG family. As to quaternary structure, interacts with GyrB. The cofactor is Zn(2+).

Inhibits all the catalytic activities of DNA gyrase by preventing its interaction with DNA. Acts by binding directly to the C-terminal domain of GyrB, which probably disrupts DNA binding by the gyrase. This Photobacterium profundum (strain SS9) protein is DNA gyrase inhibitor YacG.